The following is a 172-amino-acid chain: 3-phenylpropionate/cinnamic acid dioxygenase subunit beta (172 aa).

The protein belongs to the bacterial ring-hydroxylating dioxygenase beta subunit family. This dioxygenase system consists of four proteins: the two subunits of the hydroxylase component (HcaE and HcaF), a ferredoxin (HcaC) and a ferredoxin reductase (HcaD).

It carries out the reaction 3-phenylpropanoate + NADH + O2 + H(+) = 3-(cis-5,6-dihydroxycyclohexa-1,3-dien-1-yl)propanoate + NAD(+). It catalyses the reaction (E)-cinnamate + NADH + O2 + H(+) = (2E)-3-(cis-5,6-dihydroxycyclohexa-1,3-dien-1-yl)prop-2-enoate + NAD(+). It functions in the pathway aromatic compound metabolism; 3-phenylpropanoate degradation. Part of the multicomponent 3-phenylpropionate dioxygenase. Converts 3-phenylpropionic acid (PP) and cinnamic acid (CI) into 3-phenylpropionate-dihydrodiol (PP-dihydrodiol) and cinnamic acid-dihydrodiol (CI-dihydrodiol), respectively. The sequence is that of 3-phenylpropionate/cinnamic acid dioxygenase subunit beta from Escherichia coli O17:K52:H18 (strain UMN026 / ExPEC).